A 423-amino-acid chain; its full sequence is Cytochrome b mRNA maturase bI2 (423 aa).

The Mitochondrial matrix portion of the chain corresponds to 1–31; that stretch reads MAFRKSNVYLSLVNSYIIDSPQPSSINYWWN. Positions 1-143 are cytochrome b; sequence MAFRKSNVYL…CVYGQMSHWG (143 aa). A helical transmembrane segment spans residues 32 to 52; the sequence is MGSLLGLCLVIQIVTGIFMAM. The Mitochondrial intermembrane segment spans residues 53–84; that stretch reads HYSSNIELAFSSVEHIMRDVHNGYILRYLHAN. The chain crosses the membrane as a helical span at residues 85–105; that stretch reads GASFFFMVMFMHMAKGLYYGS. At 106-115 the chain is on the mitochondrial matrix side; it reads YRSPRVTLWN. The helical transmembrane segment at 116 to 136 threads the bilayer; that stretch reads VGVIIFILTIATAFLGYCCVY. Residues 137-153 are Mitochondrial intermembrane-facing; sequence GQMSHWGNMNIASNMFN. Positions 144-423 are maturase; sequence NMNIASNMFN…SMKYKLGNYL (280 aa). Residues 154-174 form a helical membrane-spanning segment; it reads MMKTIYMMMLMLLIYIFYTIM. The Mitochondrial matrix portion of the chain corresponds to 175-423; it reads MRQMMKTKEY…SMKYKLGNYL (249 aa).

This sequence in the N-terminal section; belongs to the cytochrome b family. The protein in the C-terminal section; belongs to the LAGLIDADG endonuclease family.

The protein resides in the mitochondrion inner membrane. In terms of biological role, this protein is responsible for splicing and maturation of cytochrome b mRNA. Specifically, it may be responsible for the splicing specificity of the second intron. This is Cytochrome b mRNA maturase bI2 (BI2) from Saccharomyces cerevisiae (strain ATCC 204508 / S288c) (Baker's yeast).